An 81-amino-acid polypeptide reads, in one-letter code: Putative membrane protein insertion efficiency factor (81 aa).

The tract at residues 60-81 (WNPGGYDPVPTHNTSNSSPMAE) is disordered. A compositionally biased stretch (polar residues) spans 70 to 81 (THNTSNSSPMAE).

Belongs to the UPF0161 family.

Its subcellular location is the cell inner membrane. In terms of biological role, could be involved in insertion of integral membrane proteins into the membrane. This is Putative membrane protein insertion efficiency factor from Stutzerimonas stutzeri (strain A1501) (Pseudomonas stutzeri).